We begin with the raw amino-acid sequence, 322 residues long: Phosphatidylserine decarboxylase proenzyme (322 aa).

Active-site charge relay system; for autoendoproteolytic cleavage activity residues include D90, H147, and S254. The active-site Schiff-base intermediate with substrate; via pyruvic acid; for decarboxylase activity is the S254. S254 carries the post-translational modification Pyruvic acid (Ser); by autocatalysis. A disordered region spans residues 293–322 (PDAEPAPLPAEEIEAEHDASPLVDDKKDQV). A compositionally biased stretch (basic and acidic residues) spans 308–322 (EHDASPLVDDKKDQV).

Belongs to the phosphatidylserine decarboxylase family. PSD-B subfamily. Prokaryotic type I sub-subfamily. In terms of assembly, heterodimer of a large membrane-associated beta subunit and a small pyruvoyl-containing alpha subunit. Pyruvate serves as cofactor. Post-translationally, is synthesized initially as an inactive proenzyme. Formation of the active enzyme involves a self-maturation process in which the active site pyruvoyl group is generated from an internal serine residue via an autocatalytic post-translational modification. Two non-identical subunits are generated from the proenzyme in this reaction, and the pyruvate is formed at the N-terminus of the alpha chain, which is derived from the carboxyl end of the proenzyme. The autoendoproteolytic cleavage occurs by a canonical serine protease mechanism, in which the side chain hydroxyl group of the serine supplies its oxygen atom to form the C-terminus of the beta chain, while the remainder of the serine residue undergoes an oxidative deamination to produce ammonia and the pyruvoyl prosthetic group on the alpha chain. During this reaction, the Ser that is part of the protease active site of the proenzyme becomes the pyruvoyl prosthetic group, which constitutes an essential element of the active site of the mature decarboxylase.

It is found in the cell membrane. The catalysed reaction is a 1,2-diacyl-sn-glycero-3-phospho-L-serine + H(+) = a 1,2-diacyl-sn-glycero-3-phosphoethanolamine + CO2. Its pathway is phospholipid metabolism; phosphatidylethanolamine biosynthesis; phosphatidylethanolamine from CDP-diacylglycerol: step 2/2. Catalyzes the formation of phosphatidylethanolamine (PtdEtn) from phosphatidylserine (PtdSer). In Escherichia coli (strain 55989 / EAEC), this protein is Phosphatidylserine decarboxylase proenzyme.